Consider the following 107-residue polypeptide: Protein beta (107 aa).

In Bovine ephemeral fever virus (strain BB7721) (BEFV), this protein is Protein beta (beta).